Here is a 306-residue protein sequence, read N- to C-terminus: Glutaminase (306 aa).

Substrate-binding residues include Ser61, Asn111, Glu155, Asn162, Tyr186, Tyr238, and Val256.

The protein belongs to the glutaminase family. Homotetramer.

The enzyme catalyses L-glutamine + H2O = L-glutamate + NH4(+). The polypeptide is Glutaminase (Pseudomonas entomophila (strain L48)).